The sequence spans 229 residues: MPKHGKRYRALLEKVDPNKIYTIDEAAHLVKELATAKFDETVEVHAKLGIDPRRSDQNVRGTVSLPHGLGKQVRVLAIAKGEKIKEAEEAGADYVGGEEIIQKILDGWMDFDAVVATPDVMGAVGSKLGRILGPRGLLPNPKAGTVGFNIGEIIREIKAGRIEFRNDKTGAIHAPVGKASFPPEKLADNIRAFIRALEAHKPEGAKGTFLRSVYVTTTMGPSVRINPHS.

The protein belongs to the universal ribosomal protein uL1 family. As to quaternary structure, part of the 50S ribosomal subunit.

Its function is as follows. Binds directly to 23S rRNA. The L1 stalk is quite mobile in the ribosome, and is involved in E site tRNA release. In terms of biological role, protein L1 is also a translational repressor protein, it controls the translation of the L11 operon by binding to its mRNA. The protein is Large ribosomal subunit protein uL1 of Thermus thermophilus (strain ATCC BAA-163 / DSM 7039 / HB27).